Here is a 360-residue protein sequence, read N- to C-terminus: Ethanolamine-phosphate cytidylyltransferase (360 aa).

CTP-binding positions include 207–208 (GF), 215–218 (HTEA), lysine 243, 291–294 (HGDD), and 321–325 (HTEGL).

This sequence belongs to the cytidylyltransferase family.

The enzyme catalyses phosphoethanolamine + CTP + H(+) = CDP-ethanolamine + diphosphate. Its pathway is phospholipid metabolism; phosphatidylethanolamine biosynthesis; phosphatidylethanolamine from ethanolamine: step 2/3. In terms of biological role, ethanolamine-phosphate cytidylyltransferase that catalyzes the second step in the synthesis of phosphatidylethanolamine (PE) from ethanolamine via the CDP-ethanolamine pathway. The polypeptide is Ethanolamine-phosphate cytidylyltransferase (pctA) (Dictyostelium discoideum (Social amoeba)).